The primary structure comprises 318 residues: tRNA pseudouridine synthase B (318 aa).

Asp47 (nucleophile) is an active-site residue.

It belongs to the pseudouridine synthase TruB family. Type 1 subfamily.

It carries out the reaction uridine(55) in tRNA = pseudouridine(55) in tRNA. In terms of biological role, responsible for synthesis of pseudouridine from uracil-55 in the psi GC loop of transfer RNAs. The polypeptide is tRNA pseudouridine synthase B (Colwellia psychrerythraea (strain 34H / ATCC BAA-681) (Vibrio psychroerythus)).